Reading from the N-terminus, the 151-residue chain is Mating pheromone 3 (151 aa).

The first 16 residues, 1-16, serve as a signal peptide directing secretion; it reads MKAIFIILAILMVTQA. Positions 17–52 are excised as a propeptide; it reads FKMTSKVNTKLQSQIQSKFQSKNKLASTFQTSSQLK.

The protein resides in the secreted. Mating ciliate pheromones (or gamones) are diffusible extracellular communication signals that distinguish different intraspecific classes of cells commonly referred to as 'mating types'. They prepare the latter for conjugation by changing their cell surface properties. The sequence is that of Mating pheromone 3 (PHR3) from Euplotoides octocarinatus (Freshwater ciliate).